The following is a 277-amino-acid chain: Phosphoenolpyruvate synthase regulatory protein (277 aa).

157–164 (GVSRCGKT) contributes to the ADP binding site.

It belongs to the pyruvate, phosphate/water dikinase regulatory protein family. PSRP subfamily.

It catalyses the reaction [pyruvate, water dikinase] + ADP = [pyruvate, water dikinase]-phosphate + AMP + H(+). It carries out the reaction [pyruvate, water dikinase]-phosphate + phosphate + H(+) = [pyruvate, water dikinase] + diphosphate. Functionally, bifunctional serine/threonine kinase and phosphorylase involved in the regulation of the phosphoenolpyruvate synthase (PEPS) by catalyzing its phosphorylation/dephosphorylation. The polypeptide is Phosphoenolpyruvate synthase regulatory protein (Escherichia coli O1:K1 / APEC).